A 251-amino-acid polypeptide reads, in one-letter code: E3 ubiquitin-protein ligase Os06g0535400 (251 aa).

The next 3 helical transmembrane spans lie at 28–48 (VVAATFTGSFSLQIFLFYCFA), 102–122 (LANRCFAVVFMVFVPLVIVVF), and 127–147 (ADVVAYALCLANILVMVVWLS). An RING-type; atypical zinc finger spans residues 185–227 (CCVCLAGMREAQALRDLPRCGHRFHAKCIGKWLTAHPTCPVCR).

Its subcellular location is the membrane. The catalysed reaction is S-ubiquitinyl-[E2 ubiquitin-conjugating enzyme]-L-cysteine + [acceptor protein]-L-lysine = [E2 ubiquitin-conjugating enzyme]-L-cysteine + N(6)-ubiquitinyl-[acceptor protein]-L-lysine.. It functions in the pathway protein modification; protein ubiquitination. In terms of biological role, possesses E3 ubiquitin-protein ligase in vitro. This is E3 ubiquitin-protein ligase Os06g0535400 from Oryza sativa subsp. japonica (Rice).